A 483-amino-acid polypeptide reads, in one-letter code: Regulatory protein ViaA (483 aa).

It belongs to the ViaA family. As to quaternary structure, homodimer. Interacts with RavA.

It localises to the cytoplasm. Component of the RavA-ViaA chaperone complex, which may act on the membrane to optimize the function of some of the respiratory chains. ViaA stimulates the ATPase activity of RavA. The chain is Regulatory protein ViaA from Escherichia coli O9:H4 (strain HS).